Consider the following 343-residue polypeptide: Tetraacyldisaccharide 4'-kinase (343 aa).

An ATP-binding site is contributed by threonine 55 to threonine 62.

It belongs to the LpxK family.

It catalyses the reaction a lipid A disaccharide + ATP = a lipid IVA + ADP + H(+). The protein operates within glycolipid biosynthesis; lipid IV(A) biosynthesis; lipid IV(A) from (3R)-3-hydroxytetradecanoyl-[acyl-carrier-protein] and UDP-N-acetyl-alpha-D-glucosamine: step 6/6. Its function is as follows. Transfers the gamma-phosphate of ATP to the 4'-position of a tetraacyldisaccharide 1-phosphate intermediate (termed DS-1-P) to form tetraacyldisaccharide 1,4'-bis-phosphate (lipid IVA). This chain is Tetraacyldisaccharide 4'-kinase, found in Chelativorans sp. (strain BNC1).